A 186-amino-acid chain; its full sequence is Photosystem I assembly protein Ycf4 (186 aa).

Helical transmembrane passes span 22–42 and 57–77; these read FCWACILFLGSLGFLVVGTSS and IIFFPQGIVMSFYGIAGLFIS.

This sequence belongs to the Ycf4 family.

The protein localises to the plastid. It is found in the chloroplast thylakoid membrane. In terms of biological role, seems to be required for the assembly of the photosystem I complex. This chain is Photosystem I assembly protein Ycf4, found in Dioscorea elephantipes (Elephant's foot yam).